Consider the following 157-residue polypeptide: Transcriptional repressor NrdR (157 aa).

A zinc finger spans residues 3–34 (CPFCRHPDSRVIDSRTSDDGLSIRRRRQCPEC). The 91-residue stretch at 46 to 136 (LSVIKRSGVV…VYQAFDSLED (91 aa)) folds into the ATP-cone domain.

The protein belongs to the NrdR family. Requires Zn(2+) as cofactor.

Negatively regulates transcription of bacterial ribonucleotide reductase nrd genes and operons by binding to NrdR-boxes. This chain is Transcriptional repressor NrdR, found in Leifsonia xyli subsp. xyli (strain CTCB07).